The primary structure comprises 120 residues: Chaperonin GroEL (120 aa).

23-27 is an ATP binding site; sequence DGTTT.

This sequence belongs to the chaperonin (HSP60) family. In terms of assembly, forms a cylinder of 14 subunits composed of two heptameric rings stacked back-to-back. Interacts with the co-chaperonin GroES.

It localises to the cytoplasm. It carries out the reaction ATP + H2O + a folded polypeptide = ADP + phosphate + an unfolded polypeptide.. Functionally, together with its co-chaperonin GroES, plays an essential role in assisting protein folding. The GroEL-GroES system forms a nano-cage that allows encapsulation of the non-native substrate proteins and provides a physical environment optimized to promote and accelerate protein folding. This chain is Chaperonin GroEL, found in Mycobacterium asiaticum.